Here is a 341-residue protein sequence, read N- to C-terminus: Putative amino-acid ABC transporter-binding protein YhdW (341 aa).

The signal sequence occupies residues 1-19 (MKKMMIATLAAASVLLAVA).

It belongs to the bacterial solute-binding protein 3 family.

Its subcellular location is the periplasm. In terms of biological role, probably part of the binding-protein-dependent transport system YdhWXYZ for an amino acid. The sequence is that of Putative amino-acid ABC transporter-binding protein YhdW (yhdW) from Escherichia coli (strain K12).